The sequence spans 412 residues: UPF0754 membrane protein Synpcc7942_1098 (412 aa).

The next 2 membrane-spanning stretches (helical) occupy residues 8 to 28 and 390 to 410; these read LWLL…DLAI and IGGV…VWSL.

It belongs to the UPF0754 family.

It localises to the cell inner membrane. The polypeptide is UPF0754 membrane protein Synpcc7942_1098 (Synechococcus elongatus (strain ATCC 33912 / PCC 7942 / FACHB-805) (Anacystis nidulans R2)).